We begin with the raw amino-acid sequence, 368 residues long: Glutamate 5-kinase (368 aa).

Lys13 is an ATP binding site. The substrate site is built by Ser54, Asp141, and Asn153. 173–174 contributes to the ATP binding site; that stretch reads SD. One can recognise a PUA domain in the interval 278–355; it reads KGSLRLDAGA…DEIPEILGYP (78 aa).

It belongs to the glutamate 5-kinase family.

It is found in the cytoplasm. It catalyses the reaction L-glutamate + ATP = L-glutamyl 5-phosphate + ADP. Its pathway is amino-acid biosynthesis; L-proline biosynthesis; L-glutamate 5-semialdehyde from L-glutamate: step 1/2. In terms of biological role, catalyzes the transfer of a phosphate group to glutamate to form L-glutamate 5-phosphate. This chain is Glutamate 5-kinase, found in Jannaschia sp. (strain CCS1).